We begin with the raw amino-acid sequence, 399 residues long: Acetate kinase (399 aa).

N7 contacts Mg(2+). Residue K14 coordinates ATP. Residue R91 participates in substrate binding. The active-site Proton donor/acceptor is the D148. Residues 208–212 (HLGNG), 283–285 (DFR), and 331–335 (GLGEN) each bind ATP. E384 provides a ligand contact to Mg(2+).

It belongs to the acetokinase family. As to quaternary structure, homodimer. Requires Mg(2+) as cofactor. It depends on Mn(2+) as a cofactor.

The protein localises to the cytoplasm. It catalyses the reaction acetate + ATP = acetyl phosphate + ADP. It functions in the pathway metabolic intermediate biosynthesis; acetyl-CoA biosynthesis; acetyl-CoA from acetate: step 1/2. Its function is as follows. Catalyzes the formation of acetyl phosphate from acetate and ATP. Can also catalyze the reverse reaction. This is Acetate kinase from Desulfitobacterium hafniense (strain DSM 10664 / DCB-2).